The sequence spans 613 residues: MASAQSFYNQSSVLKINVMVVDDDHVFLDIMSRMLQHSKYRVIAVDDPKKALSTLKIQRDNIDLIITDYYMPGMNGLQLKKQITQEFGNLPVLVMSSDTNKEEESLSCGAMGFIPKPIHPTDLTKIYQFALSNKRNGKSTLSTEQNHKDADVSVPQQITLVPEQADVLKTKRKNCSFKSDSRTVNSTNGSCVSTDGSRKNRKRKPNGGPSDDGESMSQPAKKKKIQWTDSLHDLFLQAIRHIGLDKAVPKKILAFMSVPYLTRENVASHLQKYRIFLRRVAEQGLYSMLSDRGIDSMFRQTHIKEPYFNYYTPSTSWYDTRLNNRSFYSKPVHGFGQSKLLSTTREPVCFNQMPYNYMNRSSTYEPHRIGSGSNLTLPIQSNLSFPNQPSQNEERRSFFEPPVMANKIAQTSQVLGFGQLGPSAISGHNFNNNMTSRYGSLIPSQPGPSHFSYGMQSFLNNENVTYNPQPPANATTQPNLDELPQLENLNLYNDFGNTSELPYNISNFQFDDNKHQQGEADPTKFELPAAKFSTELNHEDDGDWTFVNINQGQSNGETSNTIASPETNTPILNINHNQNQGQDVPEFNDWSFLDPQELVDDDFMNSLFNNDMN.

Positions 17 to 131 (NVMVVDDDHV…DLTKIYQFAL (115 aa)) constitute a Response regulatory domain. D68 carries the post-translational modification 4-aspartylphosphate. Polar residues predominate over residues 178–195 (KSDSRTVNSTNGSCVSTD). Positions 178–223 (KSDSRTVNSTNGSCVSTDGSRKNRKRKPNGGPSDDGESMSQPAKKK) are disordered. The Nuclear localization signal signature appears at 221 to 224 (KKKK). The myb-like GARP DNA-binding region spans 224 to 274 (KIQWTDSLHDLFLQAIRHIGLDKAVPKKILAFMSVPYLTRENVASHLQKYR).

This sequence belongs to the ARR family. Type-B subfamily. In terms of assembly, binds the target DNA as a monomer. In terms of processing, two-component system major event consists of a His-to-Asp phosphorelay between a sensor histidine kinase (HK) and a response regulator (RR). In plants, the His-to-Asp phosphorelay involves an additional intermediate named Histidine-containing phosphotransfer protein (HPt). This multistep phosphorelay consists of a His-Asp-His-Asp sequential transfer of a phosphate group between first a His and an Asp of the HK protein, followed by the transfer to a conserved His of the HPt protein and finally the transfer to an Asp in the receiver domain of the RR protein. In terms of tissue distribution, mainly expressed in siliques. Also found in germinating seedlings, stems, flowers and roots, but not in rosette leaves.

The protein localises to the nucleus. Its function is as follows. Putative transcriptional activator that binds specifically to the DNA sequence 5'-[AG]GATT-3'. Functions as a response regulator involved in His-to-Asp phosphorelay signal transduction system. Phosphorylation of the Asp residue in the receiver domain activates the ability of the protein to promote the transcription of target genes. Could directly activate some type-A response regulators in response to cytokinins. The chain is Putative two-component response regulator ARR21 (ARR21) from Arabidopsis thaliana (Mouse-ear cress).